Reading from the N-terminus, the 191-residue chain is Transcriptional regulator MET32 (191 aa).

The tract at residues 70–96 (KKENALPKPPKSSKSKPQDRRNSTGEK) is disordered. The span at 85–96 (KPQDRRNSTGEK) shows a compositional bias: basic and acidic residues. The C2H2-type 1 zinc finger occupies 98–120 (FKCAKCSLEFSRSSDLRRHEKTH). The C2H2-type 2; atypical zinc finger occupies 126-150 (NICPQCGKGFARKDALKRHYDTLTC).

As to quaternary structure, interacts with MET4 and MET28.

The protein resides in the cytoplasm. Its subcellular location is the nucleus. In terms of biological role, auxiliary transcriptional regulator of sulfur amino acid metabolism. Involved in the transcriptional activation of MET28. This chain is Transcriptional regulator MET32 (MET32), found in Saccharomyces cerevisiae (strain ATCC 204508 / S288c) (Baker's yeast).